We begin with the raw amino-acid sequence, 223 residues long: Holliday junction branch migration complex subunit RuvA (223 aa).

A domain I region spans residues 1-67 (MIGWLKGEKI…EDGSNLFGFI (67 aa)). Residues 68-146 (EKSERDLFRK…DFDLNNEFSP (79 aa)) form a domain II region. Positions 147 to 157 (PTKLRPESAED) are flexible linker. Positions 158–223 (LNEELLTEIK…FKQALITLNK (66 aa)) are domain III.

This sequence belongs to the RuvA family. In terms of assembly, homotetramer. Forms an RuvA(8)-RuvB(12)-Holliday junction (HJ) complex. HJ DNA is sandwiched between 2 RuvA tetramers; dsDNA enters through RuvA and exits via RuvB. An RuvB hexamer assembles on each DNA strand where it exits the tetramer. Each RuvB hexamer is contacted by two RuvA subunits (via domain III) on 2 adjacent RuvB subunits; this complex drives branch migration. In the full resolvosome a probable DNA-RuvA(4)-RuvB(12)-RuvC(2) complex forms which resolves the HJ.

Its subcellular location is the cytoplasm. Its function is as follows. The RuvA-RuvB-RuvC complex processes Holliday junction (HJ) DNA during genetic recombination and DNA repair, while the RuvA-RuvB complex plays an important role in the rescue of blocked DNA replication forks via replication fork reversal (RFR). RuvA specifically binds to HJ cruciform DNA, conferring on it an open structure. The RuvB hexamer acts as an ATP-dependent pump, pulling dsDNA into and through the RuvAB complex. HJ branch migration allows RuvC to scan DNA until it finds its consensus sequence, where it cleaves and resolves the cruciform DNA. The sequence is that of Holliday junction branch migration complex subunit RuvA from Prochlorococcus marinus (strain MIT 9211).